Reading from the N-terminus, the 201-residue chain is Potassium-transporting ATPase KdpC subunit (201 aa).

Residues I13–I33 traverse the membrane as a helical segment.

It belongs to the KdpC family. As to quaternary structure, the system is composed of three essential subunits: KdpA, KdpB and KdpC.

The protein localises to the cell membrane. Part of the high-affinity ATP-driven potassium transport (or Kdp) system, which catalyzes the hydrolysis of ATP coupled with the electrogenic transport of potassium into the cytoplasm. This subunit acts as a catalytic chaperone that increases the ATP-binding affinity of the ATP-hydrolyzing subunit KdpB by the formation of a transient KdpB/KdpC/ATP ternary complex. The chain is Potassium-transporting ATPase KdpC subunit from Clostridium botulinum (strain Alaska E43 / Type E3).